A 129-amino-acid chain; its full sequence is uncharacterized protein (129 aa).

Positions 86 to 96 (NDGFSSDDEPE) are enriched in acidic residues. Positions 86–129 (NDGFSSDDEPEEHVILTEDNQGEPSETPQATFDITEFIKTEDED) are disordered. Positions 103-117 (EDNQGEPSETPQATF) are enriched in polar residues.

It belongs to the asfivirus D129L family.

This is an uncharacterized protein from African swine fever virus (isolate Tick/South Africa/Pretoriuskop Pr4/1996) (ASFV).